Reading from the N-terminus, the 87-residue chain is Small ribosomal subunit protein bS20 (87 aa).

Residues 1–27 (MANIKSAKKRALQSERRRQHNASRRSM) are compositionally biased toward basic residues. The segment at 1 to 31 (MANIKSAKKRALQSERRRQHNASRRSMTRTS) is disordered.

Belongs to the bacterial ribosomal protein bS20 family.

Binds directly to 16S ribosomal RNA. The protein is Small ribosomal subunit protein bS20 of Pseudoalteromonas atlantica (strain T6c / ATCC BAA-1087).